The following is a 465-amino-acid chain: Dihydrolipoyllysine-residue acetyltransferase component 5 of pyruvate dehydrogenase complex, chloroplastic (465 aa).

A chloroplast-targeting transit peptide spans 1-31 (MSRLLQTPFLPSVSLPTKTRSSVTGFRVKPR). The Lipoyl-binding domain occupies 39-114 (IREIFMPALS…PVGSAIALLA (76 aa)). Lysine 80 is subject to N6-lipoyllysine. The tract at residues 123 to 148 (AKAKASGGGGGGDSKAPPASPPTAAV) is disordered. The segment covering 136–148 (SKAPPASPPTAAV) has biased composition (low complexity). The Peripheral subunit-binding (PSBD) domain maps to 184–221 (VASPYAKKLAKELKVELAGLVGSGPMGRIVAKDVEAVA). Histidine 438 is an active-site residue.

It belongs to the 2-oxoacid dehydrogenase family. It depends on (R)-lipoate as a cofactor.

The protein localises to the plastid. It localises to the chloroplast stroma. It carries out the reaction N(6)-[(R)-dihydrolipoyl]-L-lysyl-[protein] + acetyl-CoA = N(6)-[(R)-S(8)-acetyldihydrolipoyl]-L-lysyl-[protein] + CoA. Functionally, the pyruvate dehydrogenase complex catalyzes the overall conversion of pyruvate to acetyl-CoA and CO(2). It contains multiple copies of three enzymatic components: pyruvate dehydrogenase (E1), dihydrolipoamide acetyltransferase (E2) and lipoamide dehydrogenase (E3). This is Dihydrolipoyllysine-residue acetyltransferase component 5 of pyruvate dehydrogenase complex, chloroplastic (EMB3003) from Arabidopsis thaliana (Mouse-ear cress).